Reading from the N-terminus, the 941-residue chain is Translation initiation factor IF-2 (941 aa).

Disordered stretches follow at residues 61–204 and 249–274; these read IQSN…RREN and QEKD…KNNK. The span at 147–163 shows a compositional bias: basic and acidic residues; that stretch reads EKAKQKLQEIQKSREAL. The segment covering 164-179 has biased composition (low complexity); that stretch reads NKLTQSNTNNANNANS. A compositionally biased stretch (basic and acidic residues) spans 180-204; that stretch reads AKKEISEVAKQEREQEHLDNKRREN. The tr-type G domain occupies 440 to 609; it reads ERPPVVTIMG…LIQADIMELK (170 aa). The tract at residues 449–456 is G1; sequence GHVDHGKT. 449-456 is a binding site for GTP; it reads GHVDHGKT. The tract at residues 474–478 is G2; sequence GITQH. The tract at residues 495–498 is G3; it reads DTPG. Residues 495–499 and 549–552 contribute to the GTP site; these read DTPGH and NKMD. The interval 549-552 is G4; sequence NKMD. Positions 585–587 are G5; the sequence is SAK.

The protein belongs to the TRAFAC class translation factor GTPase superfamily. Classic translation factor GTPase family. IF-2 subfamily.

The protein localises to the cytoplasm. In terms of biological role, one of the essential components for the initiation of protein synthesis. Protects formylmethionyl-tRNA from spontaneous hydrolysis and promotes its binding to the 30S ribosomal subunits. Also involved in the hydrolysis of GTP during the formation of the 70S ribosomal complex. This Helicobacter acinonychis (strain Sheeba) protein is Translation initiation factor IF-2.